The sequence spans 428 residues: Glutamate-1-semialdehyde 2,1-aminomutase (428 aa).

An N6-(pyridoxal phosphate)lysine modification is found at Lys-267.

This sequence belongs to the class-III pyridoxal-phosphate-dependent aminotransferase family. HemL subfamily. In terms of assembly, homodimer. Requires pyridoxal 5'-phosphate as cofactor.

Its subcellular location is the cytoplasm. It carries out the reaction (S)-4-amino-5-oxopentanoate = 5-aminolevulinate. It participates in porphyrin-containing compound metabolism; protoporphyrin-IX biosynthesis; 5-aminolevulinate from L-glutamyl-tRNA(Glu): step 2/2. This chain is Glutamate-1-semialdehyde 2,1-aminomutase, found in Flavobacterium johnsoniae (strain ATCC 17061 / DSM 2064 / JCM 8514 / BCRC 14874 / CCUG 350202 / NBRC 14942 / NCIMB 11054 / UW101) (Cytophaga johnsonae).